Consider the following 119-residue polypeptide: Toxin ICK-9 (119 aa).

An N-terminal signal peptide occupies residues 1–19 (MMKLYSLVIIATLAAAAFA). 4 cysteine pairs are disulfide-bonded: cysteine 59/cysteine 74, cysteine 67/cysteine 80, cysteine 71/cysteine 116, and cysteine 73/cysteine 87.

This sequence belongs to the neurotoxin 25 family. ICK-8 subfamily. In terms of tissue distribution, expressed by the venom gland.

The protein localises to the secreted. In terms of biological role, ion channel inhibitor. The chain is Toxin ICK-9 from Trittame loki (Brush-footed trapdoor spider).